The primary structure comprises 183 residues: MSQYSGKICFYEGRCFTGRCLEVYGDCDNFQDRGFMNRVNSIRVESGAWICYDHPDFKGQQYILERGEYPEFQRWNSHNDHMGSCRPIRMHGEQYRMELFEGCNYTGQCMELCDDCPFLQSRGFNTNCVNSVRVFGDGAWVMYEEPNFRGRMYIVERGNYCGHNEWQAQNPHIQSIRRIVNYF.

4 Beta/gamma crystallin 'Greek key' domains span residues 6–46 (GKIC…RVES), 47–89 (GAWI…RPIR), 95–136 (YRME…RVFG), and 138–180 (GAWV…RRIV).

Belongs to the beta/gamma-crystallin family. In terms of assembly, monomer.

Its function is as follows. Crystallins are the dominant structural components of the vertebrate eye lens. The sequence is that of Gamma-crystallin N-B (crygnb) from Danio rerio (Zebrafish).